Reading from the N-terminus, the 361-residue chain is Peptide chain release factor 1 (361 aa).

Gln-237 bears the N5-methylglutamine mark.

It belongs to the prokaryotic/mitochondrial release factor family. Methylated by PrmC. Methylation increases the termination efficiency of RF1.

Its subcellular location is the cytoplasm. In terms of biological role, peptide chain release factor 1 directs the termination of translation in response to the peptide chain termination codons UAG and UAA. In Chromohalobacter salexigens (strain ATCC BAA-138 / DSM 3043 / CIP 106854 / NCIMB 13768 / 1H11), this protein is Peptide chain release factor 1.